Here is a 674-residue protein sequence, read N- to C-terminus: Pre-mRNA-splicing factor cwf4 (674 aa).

16 HAT repeats span residues 50–82 (EFQGRKRKEFEDAIRRNRLAMGHWMRYGQWELD), 84–116 (KEFARARSVFERALDVDSTYIPLWLKYIECEMK), 118–150 (RNINHARNLFDRAVTQLPRVDKLWYKYVYMEEM), 152–183 (GNITGCRQVFERWLKWEPDENCWMSYIRMERR), 185–216 (HENERARGIYERFVVVHPEVTNWLRWARFEEE), 218–253 (GNAANVRQVYLAAIDALGQEFLNERFFIAFAKFEIR), 255–289 (KEYERARTIFKYAIDFMPRSKSMELYKEYTHFEKQ), 299–331 (TVLDKRRLQYEKLLKDSPYDYDTWLDLLKLEES), 333–367 (GDINTIRETYEKAIAKVPEVVEKNAWRRYVYIWLN), 377–413 (KDVDRARKVYQEALKLIPHKKFTFAKLWLMYAMFELR), 415–446 (RKIDVARKTLGRALGMCPKPKLFRGYIEFEDA), 448–480 (KQFDRCRILYEKWILYDPEACAPWLGYAALETK), 482–516 (GDSDRARALYNLAVNQPILETPELVWKAYIDFEFE), 518–549 (MEYGKARSIYQQLLRTAPHVKVWISFANFEIA), 567–608 (TAVV…MHGT), and 610–643 (DTRKHVSSLMPQVVKKRRRLEDGSFEEYLDYLFP).

This sequence belongs to the crooked-neck family. As to quaternary structure, belongs to the 40S cdc5-associated complex (or cwf complex), a spliceosome sub-complex reminiscent of a late-stage spliceosome composed of the U2, U5 and U6 snRNAs and at least brr2, cdc5, cwf2/prp3, cwf3/syf1, cwf4/syf3, cwf5/ecm2, spp42/cwf6, cwf7/spf27, cwf8, cwf9, cwf10, cwf11, cwf12, prp45/cwf13, cwf14, cwf15, cwf16, cwf17, cwf18, cwf19, cwf20, cwf21, cwf22, cwf23, cwf24, cwf25, cwf26, cyp7/cwf27, cwf28, cwf29/ist3, lea1, msl1, prp5/cwf1, prp10, prp12/sap130, prp17, prp22, sap61, sap62, sap114, sap145, slu7, smb1, smd1, smd3, smf1, smg1 and syf2.

Its subcellular location is the nucleus. Functionally, involved in pre-mRNA splicing and cell cycle progression. Required for the spliceosome assembly and initiation of the DNA replication. In Schizosaccharomyces pombe (strain 972 / ATCC 24843) (Fission yeast), this protein is Pre-mRNA-splicing factor cwf4 (cwf4).